The primary structure comprises 200 residues: Small ribosomal subunit protein uS4 (200 aa).

Positions 22 to 42 (TGKELEKRPYAPGPHGPNQRK) are disordered. In terms of domain architecture, S4 RNA-binding spans 92-152 (ARLDNLVYRM…EKSNNLVVVK (61 aa)).

This sequence belongs to the universal ribosomal protein uS4 family. Part of the 30S ribosomal subunit. Contacts protein S5. The interaction surface between S4 and S5 is involved in control of translational fidelity.

In terms of biological role, one of the primary rRNA binding proteins, it binds directly to 16S rRNA where it nucleates assembly of the body of the 30S subunit. With S5 and S12 plays an important role in translational accuracy. This chain is Small ribosomal subunit protein uS4, found in Bacillus cereus (strain Q1).